Reading from the N-terminus, the 103-residue chain is Large ribosomal subunit protein bL21 (103 aa).

The protein belongs to the bacterial ribosomal protein bL21 family. Part of the 50S ribosomal subunit. Contacts protein L20.

Functionally, this protein binds to 23S rRNA in the presence of protein L20. This is Large ribosomal subunit protein bL21 from Yersinia pseudotuberculosis serotype O:1b (strain IP 31758).